A 357-amino-acid chain; its full sequence is 3-isopropylmalate dehydrogenase (357 aa).

Positions 99, 109, 133, and 223 each coordinate substrate. Residues Asp-223, Asp-247, and Asp-251 each coordinate Mg(2+). Residue 283–295 (GSAPDIAGEQRAD) coordinates NAD(+).

It belongs to the isocitrate and isopropylmalate dehydrogenases family. LeuB type 2 subfamily. As to quaternary structure, homodimer. The cofactor is Mg(2+). It depends on Mn(2+) as a cofactor.

Its subcellular location is the cytoplasm. It carries out the reaction (2R,3S)-3-isopropylmalate + NAD(+) = 4-methyl-2-oxopentanoate + CO2 + NADH. The protein operates within amino-acid biosynthesis; L-leucine biosynthesis; L-leucine from 3-methyl-2-oxobutanoate: step 3/4. In terms of biological role, catalyzes the oxidation of 3-carboxy-2-hydroxy-4-methylpentanoate (3-isopropylmalate) to 3-carboxy-4-methyl-2-oxopentanoate. The product decarboxylates to 4-methyl-2 oxopentanoate. The protein is 3-isopropylmalate dehydrogenase of Leifsonia xyli subsp. xyli (strain CTCB07).